The sequence spans 265 residues: ATP synthase subunit a (265 aa).

The next 6 membrane-spanning stretches (helical) occupy residues 26 to 46 (VHLD…FFFY), 88 to 108 (IGSL…IDLI), 132 to 152 (DISA…FYTI), 168 to 188 (PFNH…TLLA), 195 to 217 (FRLF…MYMA), and 231 to 251 (LIWA…FMML).

It belongs to the ATPase A chain family. As to quaternary structure, F-type ATPases have 2 components, CF(1) - the catalytic core - and CF(0) - the membrane proton channel. CF(1) has five subunits: alpha(3), beta(3), gamma(1), delta(1), epsilon(1). CF(0) has three main subunits: a(1), b(2) and c(9-12). The alpha and beta chains form an alternating ring which encloses part of the gamma chain. CF(1) is attached to CF(0) by a central stalk formed by the gamma and epsilon chains, while a peripheral stalk is formed by the delta and b chains.

It localises to the cell inner membrane. Key component of the proton channel; it plays a direct role in the translocation of protons across the membrane. The protein is ATP synthase subunit a of Histophilus somni (strain 2336) (Haemophilus somnus).